We begin with the raw amino-acid sequence, 246 residues long: Triosephosphate isomerase (246 aa).

9 to 11 (NWK) contacts substrate. Histidine 91 serves as the catalytic Electrophile. The Proton acceptor role is filled by glutamate 161. Residues glycine 167, serine 206, and 227–228 (GG) each bind substrate.

Belongs to the triosephosphate isomerase family. In terms of assembly, homodimer.

It is found in the cytoplasm. It carries out the reaction D-glyceraldehyde 3-phosphate = dihydroxyacetone phosphate. It functions in the pathway carbohydrate biosynthesis; gluconeogenesis. Its pathway is carbohydrate degradation; glycolysis; D-glyceraldehyde 3-phosphate from glycerone phosphate: step 1/1. Its function is as follows. Involved in the gluconeogenesis. Catalyzes stereospecifically the conversion of dihydroxyacetone phosphate (DHAP) to D-glyceraldehyde-3-phosphate (G3P). In Ruegeria sp. (strain TM1040) (Silicibacter sp.), this protein is Triosephosphate isomerase.